Here is a 272-residue protein sequence, read N- to C-terminus: Shikimate dehydrogenase (NADP(+)) (272 aa).

Residues 14–16 and Thr-61 each bind shikimate; that span reads SKS. Lys-65 functions as the Proton acceptor in the catalytic mechanism. Glu-77 contributes to the NADP(+) binding site. Residues Asn-86 and Asp-102 each contribute to the shikimate site. NADP(+) contacts are provided by residues 126–130, 149–154, and Met-213; these read GAGGA and NRTVFR. Residue Tyr-215 coordinates shikimate. Gly-237 is a binding site for NADP(+).

This sequence belongs to the shikimate dehydrogenase family. In terms of assembly, homodimer.

The enzyme catalyses shikimate + NADP(+) = 3-dehydroshikimate + NADPH + H(+). It participates in metabolic intermediate biosynthesis; chorismate biosynthesis; chorismate from D-erythrose 4-phosphate and phosphoenolpyruvate: step 4/7. Its function is as follows. Involved in the biosynthesis of the chorismate, which leads to the biosynthesis of aromatic amino acids. Catalyzes the reversible NADPH linked reduction of 3-dehydroshikimate (DHSA) to yield shikimate (SA). This is Shikimate dehydrogenase (NADP(+)) from Escherichia coli O127:H6 (strain E2348/69 / EPEC).